A 289-amino-acid polypeptide reads, in one-letter code: Rhodopsin (289 aa).

At 1 to 7 (YLVSPAA) the chain is on the extracellular side. The chain crosses the membrane as a helical span at residues 8 to 32 (YAALGAYMFLLILVGFPVNFLTLYV). Topologically, residues 33–44 (TLDHKKLRTPLN) are cytoplasmic. The chain crosses the membrane as a helical span at residues 45–67 (YILLNLAVADLFMVLGGFTTTMY). Over 68-81 (TSMHGYFVLGRLGC) the chain is Extracellular. Cys81 and Cys158 are disulfide-bonded. A helical transmembrane segment spans residues 82–104 (NLEGFFATLGGEIALWSLVVLAI). The short motif at 105–107 (ERW) is the 'Ionic lock' involved in activated form stabilization element. Topologically, residues 105 to 123 (ERWIVVCKPISNFRFTEDH) are cytoplasmic. A helical transmembrane segment spans residues 124 to 144 (AIMGLAFSWVMALTCAVPPLV). The Extracellular portion of the chain corresponds to 145-173 (GWSRYIPEGMQCSCGVDYYTRAEGFNTES). The helical transmembrane segment at 174–195 (FVLYMFTVHFLIPLSVIFFCYG) threads the bilayer. The Cytoplasmic portion of the chain corresponds to 196-223 (RLLCAVKEAAAAQQESETTQRAEKEVSR). The chain crosses the membrane as a helical span at residues 224 to 245 (MVVLMVIGFLVCWLPYASVAWW). Residues 246 to 257 (IFCNQGSEFGPI) are Extracellular-facing. The chain crosses the membrane as a helical span at residues 258 to 279 (FMTLPAFFAKTSAIYNPLIYIC). Lys267 is modified (N6-(retinylidene)lysine). Residues 280-289 (MNKQFRHCMI) lie on the Cytoplasmic side of the membrane.

This sequence belongs to the G-protein coupled receptor 1 family. Opsin subfamily. Phosphorylated on some or all of the serine and threonine residues present in the C-terminal region. In terms of processing, contains one covalently linked retinal chromophore.

It localises to the membrane. The protein resides in the cell projection. Its subcellular location is the cilium. It is found in the photoreceptor outer segment. Its function is as follows. Photoreceptor required for image-forming vision at low light intensity. While most salt water fish species use retinal as chromophore, most freshwater fish use 3-dehydroretinal, or a mixture of retinal and 3-dehydroretinal. Light-induced isomerization of 11-cis to all-trans retinal triggers a conformational change that activates signaling via G-proteins. Subsequent receptor phosphorylation mediates displacement of the bound G-protein alpha subunit by arrestin and terminates signaling. In Procottus jeittelesii (Red sculpin), this protein is Rhodopsin (rho).